We begin with the raw amino-acid sequence, 306 residues long: Ribosomal protein L11 methyltransferase (306 aa).

The S-adenosyl-L-methionine site is built by Thr154, Gly179, Asp201, and Asn242.

This sequence belongs to the methyltransferase superfamily. PrmA family.

The protein localises to the cytoplasm. It carries out the reaction L-lysyl-[protein] + 3 S-adenosyl-L-methionine = N(6),N(6),N(6)-trimethyl-L-lysyl-[protein] + 3 S-adenosyl-L-homocysteine + 3 H(+). In terms of biological role, methylates ribosomal protein L11. The chain is Ribosomal protein L11 methyltransferase from Xanthomonas axonopodis pv. citri (strain 306).